We begin with the raw amino-acid sequence, 842 residues long: Leucine--tRNA ligase (842 aa).

Residues 44 to 55 (PYPSANGLHVGH) carry the 'HIGH' region motif. The 'KMSKS' region signature appears at 619-623 (KMSKS). Lysine 622 provides a ligand contact to ATP.

This sequence belongs to the class-I aminoacyl-tRNA synthetase family.

The protein localises to the cytoplasm. It catalyses the reaction tRNA(Leu) + L-leucine + ATP = L-leucyl-tRNA(Leu) + AMP + diphosphate. The sequence is that of Leucine--tRNA ligase from Borrelia hermsii (strain HS1 / DAH).